We begin with the raw amino-acid sequence, 123 residues long: Small ribosomal subunit protein uS13 (123 aa).

The interval 97–123 is disordered; that stretch reads PVRGQRTHTNAKTRKGRSKLPVAAKKK.

Belongs to the universal ribosomal protein uS13 family. In terms of assembly, part of the 30S ribosomal subunit. Forms a loose heterodimer with protein S19. Forms two bridges to the 50S subunit in the 70S ribosome.

In terms of biological role, located at the top of the head of the 30S subunit, it contacts several helices of the 16S rRNA. In the 70S ribosome it contacts the 23S rRNA (bridge B1a) and protein L5 of the 50S subunit (bridge B1b), connecting the 2 subunits; these bridges are implicated in subunit movement. Contacts the tRNAs in the A and P-sites. This Ehrlichia canis (strain Jake) protein is Small ribosomal subunit protein uS13.